A 294-amino-acid polypeptide reads, in one-letter code: 33 kDa chaperonin (294 aa).

Intrachain disulfides connect C236-C238 and C269-C272.

The protein belongs to the HSP33 family. In terms of processing, under oxidizing conditions two disulfide bonds are formed involving the reactive cysteines. Under reducing conditions zinc is bound to the reactive cysteines and the protein is inactive.

It is found in the cytoplasm. In terms of biological role, redox regulated molecular chaperone. Protects both thermally unfolding and oxidatively damaged proteins from irreversible aggregation. Plays an important role in the bacterial defense system toward oxidative stress. This Desulforamulus reducens (strain ATCC BAA-1160 / DSM 100696 / MI-1) (Desulfotomaculum reducens) protein is 33 kDa chaperonin.